The sequence spans 1584 residues: MFAKLHGKKQRPISSINSQTPRTSNTTHANSISLSSGNLIVGSNRNLRQKKEQFGSQQRASGRKLISNKENDDNVNNGGDNNYDNGERVHRHHIPGLKIKAYQAELGYHESRFSENLVMLNLVEFPDIKPGDLVELKTYHKNPSASNGDKKIYFIAKDFDGETKRRAKTSNVSILSGQLQTLLDLPSRSRIWIKLKPNKFDLQADVVEFNIKDCLLNRGDMWVLSSKLVDTCVFMDQRLAFLDSIRGTIKGIYRNGKKIVSGYIGEQTRIIFRSESARLIFLIQITDEMWNFEETGEQLFQKMVNSFFPKIFKKWKDVDTHHTITIAFAISMDLSDTSFKDLTPGESLKNSQDYFRIVVDQVSIIHWVDIMETLREEFMEIRKDLLNKQTDKGYSVANGRFSPVIKSNFLELVNFATTILTDPFKQLDLRHTTTHVMIISPGSGLFDVDYSLLRLTGKKLLSLEMTMDLICLSKAPLHIVPLFRYRDFENKLHHCVPLWLSVFFWNDHDKKSNSEWTPRCKIYDLQMMGITENELIREVDVEYLQLNKKVKSLSEFMNDYDKNAFEVKILCAGSNTKQSKKLNSKFDTVFENDVVVKARKIPATATTTHGNTKFIWRGPKVALPAIKDIQKPNVIPDLSIKTIEASFYDDCNTTNDKISTPTTSNNDNLEMNDSLVSVRSADNQNTSLALDSLKGLSKRNSLKDFTQRVITKFISNIDTSKNKKIKSTLLRDDVDNSPLGSNTPLPSSESKISGLKLQQKGLADENVISKRGNLIIKKNLSIFGLPSNEIMSGSPSSYLGSSHTRTSSKLSNMSDKAAFITEGQKSKHDDSNTYSLTQQLKHRISETWVDIKSPSIPVSSEFANELLPIRWKDVWPKYVARKYSKWRSFTTPAELPITISDFPSKDDFDRNFIFRNHSVTLNTDQEQYNQTYKDLLRDMIYMRLLTGFQICVGRQVEKIELSRESGESETVVNKYLDFNQNDAFKLYLMIDSEIHRITCSSSGIIDVERYLRKDEANLFDQVPSYIPLVKTRYESSFRDAMIDPLHVKRESLNWNQIDQVLAGYGDNLIDRKWHGFRAKYVVLPTDIPPNTYSMVINGKSETLNPEEIRVEGLRRLIGSITRSRLRTEKEKKGRKTKREEIQPEVMFYTGPLYNFINEQQTSLESSAINFKDSIFVNDNNLLNRNVELSKLAYQIQRGEDRITLVNRKWHWKKHEKCFVGSEMVNWLIRNFSDIDTREDAIKYGQKVMKEGLFVHVLNKHNFLDGHYFYQFSPEYVMDTNKLEKTNSHRSTLSDPKQMLRKASTGSSNDPSAMTPFSSVVPAISASNASVADAKEPSRPILMLSNSLVIDVDPAGKSSKQESCTVHYDRVHNPDHCFHIRLEWLTTTPKLIDDLVGNWSRLCERYGLKMIEIPWEELCTIPSVNPFHSFVEIKLAINPWEDPEFKDRELFAKSKFYYHVYLLKASGFLLDNRASKFLQNQDIEFDIMYSWGKPQFKYVQYIHHTGAYVAELRENGCLFLAPNNIYISRVNPGNIIGKIHSASSSSLDAQKVILNFKSTCLDYQKLRSIFLDAKEMWITGKIVED.

Residues 1 to 11 show a composition bias toward basic residues; that stretch reads MFAKLHGKKQR. 2 disordered regions span residues 1-37 and 49-89; these read MFAK…LSSG and QKKE…GERV. The segment covering 12–37 has biased composition (polar residues); it reads PISSINSQTPRTSNTTHANSISLSSG. The span at 74–84 shows a compositional bias: low complexity; sequence NVNNGGDNNYD. A phosphoserine mark is found at serine 680 and serine 737. Residues 732–752 are disordered; that stretch reads DDVDNSPLGSNTPLPSSESKI. Residues 738-751 are compositionally biased toward polar residues; that stretch reads PLGSNTPLPSSESK. The region spanning 1198–1273 is the DEP domain; the sequence is GEDRITLVNR…DGHYFYQFSP (76 aa). Positions 1286-1312 are disordered; that stretch reads NSHRSTLSDPKQMLRKASTGSSNDPSA. Positions 1303–1312 are enriched in polar residues; that stretch reads STGSSNDPSA.

It belongs to the IML1 family. In terms of assembly, component of the SEA complex composed of at least IML1/SEA1, RTC1/SEA2, MTC5/SEA3, NPR2, NPR3, SEA4, SEC13 and SEH1.

Its subcellular location is the vacuole membrane. Component of the SEA complex which coats the vacuolar membrane and is involved in intracellular trafficking, autophagy, response to nitrogen starvation, and amino acid biogenesis. The chain is Vacuolar membrane-associated protein IML1 (IML1) from Saccharomyces cerevisiae (strain ATCC 204508 / S288c) (Baker's yeast).